The sequence spans 80 residues: Exodeoxyribonuclease 7 small subunit (80 aa).

It belongs to the XseB family. As to quaternary structure, heterooligomer composed of large and small subunits.

The protein localises to the cytoplasm. It carries out the reaction Exonucleolytic cleavage in either 5'- to 3'- or 3'- to 5'-direction to yield nucleoside 5'-phosphates.. In terms of biological role, bidirectionally degrades single-stranded DNA into large acid-insoluble oligonucleotides, which are then degraded further into small acid-soluble oligonucleotides. This chain is Exodeoxyribonuclease 7 small subunit, found in Pseudomonas fluorescens (strain Pf0-1).